Consider the following 508-residue polypeptide: Kinesin light chain 3 (508 aa).

Residues Met-1–Pro-20 are disordered. Positions Leu-88 to Leu-150 form a coiled coil. The disordered stretch occupies residues Arg-154–Gln-197. A compositionally biased stretch (basic and acidic residues) spans Glu-161 to Ser-173. Ser-173 is subject to Phosphoserine. TPR repeat units follow at residues Leu-207–Ser-240, Ala-249–Thr-282, Ala-291–Val-324, Ala-333–Leu-366, and Ala-375–Pro-408. A disordered region spans residues Ala-409–Arg-441. Polar residues predominate over residues Gly-420–Ser-434. Residue Ser-467 is modified to Phosphoserine. The segment at Leu-486 to Arg-508 is disordered. Polar residues predominate over residues Leu-498–Arg-508. Thr-502 is subject to Phosphothreonine. At Ser-506 the chain carries Phosphoserine.

It belongs to the kinesin light chain family. In terms of assembly, oligomer composed of two heavy chains and two light chains. Associates with microtubulin in an ATP-dependent manner. Interacts with KIF5C. Interacts with ODF1. Interacts with LRGUK. Interacts with VDAC2. As to expression, expressed in postmeiotic male germ cells (at protein level). Expressed in the testes (at protein level). Expressed in spleen, intestine, brain and ovary.

The protein localises to the cytoplasm. It localises to the cytoskeleton. It is found in the mitochondrion. Kinesin is a microtubule-associated force-producing protein that may play a role in organelle transport. Plays a role during spermiogenesis in the development of the sperm tail midpiece and in the normal function of spermatozoa. May play a role in the formation of the mitochondrial sheath formation in the developing spermatid midpiece. The chain is Kinesin light chain 3 (Klc3) from Mus musculus (Mouse).